A 614-amino-acid chain; its full sequence is Translation initiation factor IF-2 (614 aa).

Positions 115 to 283 (ARAPIVTIMG…ILLIAELNDY (169 aa)) constitute a tr-type G domain. Positions 124–131 (GHVDHGKT) are G1. 124–131 (GHVDHGKT) contacts GTP. Residues 149–153 (GITQH) are G2. The interval 170-173 (DTPG) is G3. GTP is bound by residues 170-174 (DTPGH) and 224-227 (NKMD). The interval 224-227 (NKMD) is G4. The G5 stretch occupies residues 260 to 262 (SAL).

The protein belongs to the TRAFAC class translation factor GTPase superfamily. Classic translation factor GTPase family. IF-2 subfamily.

The protein localises to the cytoplasm. In terms of biological role, one of the essential components for the initiation of protein synthesis. Protects formylmethionyl-tRNA from spontaneous hydrolysis and promotes its binding to the 30S ribosomal subunits. Also involved in the hydrolysis of GTP during the formation of the 70S ribosomal complex. This Ureaplasma urealyticum serovar 10 (strain ATCC 33699 / Western) protein is Translation initiation factor IF-2.